A 97-amino-acid chain; its full sequence is C-C motif chemokine 7 (97 aa).

The first 23 residues, 1-23 (MQISAALLCVLLTAAAFTVHVWA), serve as a signal peptide directing secretion. The residue at position 24 (glutamine 24) is a Pyrrolidone carboxylic acid. Asparagine 29 is a glycosylation site (N-linked (GlcNAc...) asparagine). Cystine bridges form between cysteine 33/cysteine 57 and cysteine 34/cysteine 73.

It belongs to the intercrine beta (chemokine CC) family. Monomer. Interacts with TNFAIP6 (via Link domain).

The protein resides in the secreted. Chemotactic factor that attracts monocytes and eosinophils, but not neutrophils. Augments monocyte anti-tumor activity. This chain is C-C motif chemokine 7 (Ccl7), found in Rattus norvegicus (Rat).